The primary structure comprises 880 residues: Pyruvate, phosphate dikinase (880 aa).

Residues 1 to 348 (MNKLIYYFGN…LYILQTRTAK (348 aa)) form an N-terminal region. Residue R97 coordinates ATP. Positions 349-405 (RTAIAAINIAVQMVEEKLISKEQALMRIDPESLNQLLHTRIDYSKKLTAIAEGLPAS) are linker 1. Positions 406-503 (PGAATGIVVF…VIKQGDIITI (98 aa)) are central. T458 carries the post-translational modification Phosphothreonine; by PDRP1. The Tele-phosphohistidine intermediate role is filled by H460. Residues 504–538 (DGGSGKIFLGEMPLIQPTFSEESTLILDWADEISS) form a linker 2 region. A C-terminal region spans residues 539-879 (LKVRANAETV…AAAQAKIKQG (341 aa)). Positions 566, 622, 750, 771, 772, 773, and 774 each coordinate substrate. Mg(2+) is bound at residue E750. D774 serves as a coordination point for Mg(2+). C836 acts as the Proton donor in catalysis.

It belongs to the PEP-utilizing enzyme family. As to quaternary structure, homodimer. Mg(2+) serves as cofactor. In terms of processing, phosphorylation of Thr-458 in the dark inactivates the enzyme. Dephosphorylation upon light stimulation reactivates the enzyme.

It catalyses the reaction pyruvate + phosphate + ATP = phosphoenolpyruvate + AMP + diphosphate + H(+). With respect to regulation, activated by light-induced dephosphorylation. Inhibited by dark-induced phosphorylation. Both reactions are catalyzed by PDRP1. Its function is as follows. Catalyzes the reversible phosphorylation of pyruvate and phosphate. In Rickettsia typhi (strain ATCC VR-144 / Wilmington), this protein is Pyruvate, phosphate dikinase (ppdK).